A 199-amino-acid polypeptide reads, in one-letter code: dITP/XTP pyrophosphatase (199 aa).

Threonine 8 to lysine 13 lines the substrate pocket. Mg(2+) contacts are provided by glutamate 40 and aspartate 68. Catalysis depends on aspartate 68, which acts as the Proton acceptor. Residues serine 69, phenylalanine 154–aspartate 157, lysine 177, and histidine 182–arginine 183 contribute to the substrate site.

It belongs to the HAM1 NTPase family. As to quaternary structure, homodimer. Mg(2+) is required as a cofactor.

It carries out the reaction XTP + H2O = XMP + diphosphate + H(+). It catalyses the reaction dITP + H2O = dIMP + diphosphate + H(+). The catalysed reaction is ITP + H2O = IMP + diphosphate + H(+). In terms of biological role, pyrophosphatase that catalyzes the hydrolysis of nucleoside triphosphates to their monophosphate derivatives, with a high preference for the non-canonical purine nucleotides XTP (xanthosine triphosphate), dITP (deoxyinosine triphosphate) and ITP. Seems to function as a house-cleaning enzyme that removes non-canonical purine nucleotides from the nucleotide pool, thus preventing their incorporation into DNA/RNA and avoiding chromosomal lesions. This chain is dITP/XTP pyrophosphatase, found in Wigglesworthia glossinidia brevipalpis.